Reading from the N-terminus, the 503-residue chain is Aromatase (503 aa).

The next 2 helical transmembrane spans lie at 19-39 (EAMP…LLVW) and 303-323 (MLIA…FLIA). Residues aspartate 309 and methionine 374 each contribute to the substrate site. Cysteine 437 is a heme binding site.

This sequence belongs to the cytochrome P450 family. Requires heme as cofactor. Phosphorylated in vitro by PKA and PKG/PRKG1. These phosphorylations inhibit the catalytic activity as measured by estrone synthesis from androstenedione (36% decrease for PKA and 30% for PKG/PRKG1). As to expression, widely expressed, including in adult and fetal brain, placenta, skin fibroblasts, adipose tissue and gonads.

It is found in the endoplasmic reticulum membrane. Its subcellular location is the microsome membrane. The catalysed reaction is testosterone + 3 reduced [NADPH--hemoprotein reductase] + 3 O2 = 17beta-estradiol + formate + 3 oxidized [NADPH--hemoprotein reductase] + 4 H2O + 4 H(+). It catalyses the reaction androst-4-ene-3,17-dione + 3 reduced [NADPH--hemoprotein reductase] + 3 O2 = estrone + formate + 3 oxidized [NADPH--hemoprotein reductase] + 4 H2O + 4 H(+). The enzyme catalyses androst-4-ene-3,17-dione + reduced [NADPH--hemoprotein reductase] + O2 = 19-hydroxyandrost-4-ene-3,17-dione + oxidized [NADPH--hemoprotein reductase] + H2O + H(+). It carries out the reaction 19-hydroxyandrost-4-ene-3,17-dione + reduced [NADPH--hemoprotein reductase] + O2 = 19-oxo-androst-4-ene-3,17-dione + oxidized [NADPH--hemoprotein reductase] + 2 H2O + H(+). The catalysed reaction is 19-oxo-androst-4-ene-3,17-dione + reduced [NADPH--hemoprotein reductase] + O2 = estrone + formate + oxidized [NADPH--hemoprotein reductase] + H2O + 2 H(+). It catalyses the reaction estrone + reduced [NADPH--hemoprotein reductase] + O2 = 2-hydroxyestrone + oxidized [NADPH--hemoprotein reductase] + H2O + H(+). The enzyme catalyses 17beta-hydroxy-5alpha-androstan-3-one + reduced [NADPH--hemoprotein reductase] + O2 = 17beta,19-dihydroxy-3-oxo-5alpha-androstanone + oxidized [NADPH--hemoprotein reductase] + H2O + H(+). It carries out the reaction 17beta,19-dihydroxy-3-oxo-5alpha-androstanone + reduced [NADPH--hemoprotein reductase] + O2 = 17beta-hydroxy-3,19-dioxo-5alpha-androstanone + oxidized [NADPH--hemoprotein reductase] + 2 H2O + H(+). The catalysed reaction is 17beta-hydroxy-3,19-dioxo-5alpha-androstanone + reduced [NADPH--hemoprotein reductase] + O2 = 17beta-hydroxy-3-oxo-19-nor-5alpha-androst-1-ene + formate + oxidized [NADPH--hemoprotein reductase] + H2O + 2 H(+). It participates in steroid hormone biosynthesis. A cytochrome P450 monooxygenase that catalyzes the conversion of C19 androgens, androst-4-ene-3,17-dione (androstenedione) and testosterone to the C18 estrogens, estrone and estradiol, respectively. Catalyzes three successive oxidations of C19 androgens: two conventional oxidations at C19 yielding 19-hydroxy and 19-oxo/19-aldehyde derivatives, followed by a third oxidative aromatization step that involves C1-beta hydrogen abstraction combined with cleavage of the C10-C19 bond to yield a phenolic A ring and formic acid. Alternatively, the third oxidative reaction yields a 19-norsteroid and formic acid. Converts dihydrotestosterone to delta1,10-dehydro 19-nordihydrotestosterone and may play a role in homeostasis of this potent androgen. Also displays 2-hydroxylase activity toward estrone. Mechanistically, uses molecular oxygen inserting one oxygen atom into a substrate, and reducing the second into a water molecule, with two electrons provided by NADPH via cytochrome P450 reductase (CPR; NADPH-ferrihemoprotein reductase). The protein is Aromatase of Homo sapiens (Human).